A 499-amino-acid chain; its full sequence is Phenylalanine--tRNA ligase alpha subunit (499 aa).

L-phenylalanine is bound by residues Thr-342, 381 to 383, and Phe-422; that span reads QID. Residue Glu-424 participates in Mg(2+) binding. L-phenylalanine is bound at residue Phe-447.

The protein belongs to the class-II aminoacyl-tRNA synthetase family. Phe-tRNA synthetase alpha subunit type 2 subfamily. In terms of assembly, tetramer of two alpha and two beta subunits. The cofactor is Mg(2+).

It localises to the cytoplasm. It carries out the reaction tRNA(Phe) + L-phenylalanine + ATP = L-phenylalanyl-tRNA(Phe) + AMP + diphosphate + H(+). The polypeptide is Phenylalanine--tRNA ligase alpha subunit (Thermococcus gammatolerans (strain DSM 15229 / JCM 11827 / EJ3)).